A 273-amino-acid chain; its full sequence is MLVYLLPGSFDTREAHLDLLWEAGATGLEERGPNIRVYFDERTELPAEVADGEWHEEAEQDWQAEFKKNLRPVHAGRVTIVAPWQREEVPAGQLALVIEPGMAFGTGHHATTRMAVEALGELDLSGKRVLDVGTGSGVLAMAAAKLGAAQTLGVDIDPITIPIARDNARDNGLTSGIRFEEGTLGLDEDAEMFGEPYDVLVANLYAELHDLLAGEYAAQLRPGAPLILTGILTSKLPLVRDALDREGFTDVQVRTDSEGAGGEWALVTARRED.

Thr112, Gly133, Asp155, and Asn203 together coordinate S-adenosyl-L-methionine.

Belongs to the methyltransferase superfamily. PrmA family.

Its subcellular location is the cytoplasm. The catalysed reaction is L-lysyl-[protein] + 3 S-adenosyl-L-methionine = N(6),N(6),N(6)-trimethyl-L-lysyl-[protein] + 3 S-adenosyl-L-homocysteine + 3 H(+). In terms of biological role, methylates ribosomal protein L11. The polypeptide is Ribosomal protein L11 methyltransferase (Deinococcus radiodurans (strain ATCC 13939 / DSM 20539 / JCM 16871 / CCUG 27074 / LMG 4051 / NBRC 15346 / NCIMB 9279 / VKM B-1422 / R1)).